The primary structure comprises 235 residues: Ubiquinone biosynthesis O-methyltransferase (235 aa).

Positions 39, 59, 80, and 124 each coordinate S-adenosyl-L-methionine.

Belongs to the methyltransferase superfamily. UbiG/COQ3 family.

The enzyme catalyses a 3-demethylubiquinol + S-adenosyl-L-methionine = a ubiquinol + S-adenosyl-L-homocysteine + H(+). The catalysed reaction is a 3-(all-trans-polyprenyl)benzene-1,2-diol + S-adenosyl-L-methionine = a 2-methoxy-6-(all-trans-polyprenyl)phenol + S-adenosyl-L-homocysteine + H(+). It participates in cofactor biosynthesis; ubiquinone biosynthesis. Functionally, O-methyltransferase that catalyzes the 2 O-methylation steps in the ubiquinone biosynthetic pathway. The sequence is that of Ubiquinone biosynthesis O-methyltransferase from Vibrio vulnificus (strain CMCP6).